A 170-amino-acid chain; its full sequence is Urease accessory protein UreE (170 aa).

A disordered region spans residues 137–170; that stretch reads PFDPESGAYAHAGREQSHAHSHEHSHADGHTHAH. Over residues 148-170 the composition is skewed to basic and acidic residues; the sequence is AGREQSHAHSHEHSHADGHTHAH.

The protein belongs to the UreE family.

It localises to the cytoplasm. Its function is as follows. Involved in urease metallocenter assembly. Binds nickel. Probably functions as a nickel donor during metallocenter assembly. This chain is Urease accessory protein UreE, found in Pseudoalteromonas translucida (strain TAC 125).